Consider the following 715-residue polypeptide: Probable phospholipase YOR022C, mitochondrial (715 aa).

The N-terminal 22 residues, 1 to 22, are a transit peptide targeting the mitochondrion; that stretch reads MLRFTHRGLPSSTRFRNIFVRL. Disordered regions lie at residues 161–180, 242–268, and 311–340; these read YPVD…NKDE, TSTS…SRSI, and YNNA…RQIR. Residues 242 to 251 are compositionally biased toward low complexity; sequence TSTSFKAAKT. Residues 311–324 show a composition bias toward polar residues; the sequence is YNNADNSQGANASS. The active site involves serine 501. A DDHD domain is found at 519-700; it reads LEFQVDNLFF…AAFILKEILS (182 aa).

The protein belongs to the PA-PLA1 family.

Its subcellular location is the mitochondrion. Probable phospholipase that hydrolyzes phosphatidic acid. In Saccharomyces cerevisiae (strain ATCC 204508 / S288c) (Baker's yeast), this protein is Probable phospholipase YOR022C, mitochondrial.